The following is a 279-amino-acid chain: Secreted RxLR effector protein 152 (279 aa).

The first 22 residues, 1–22 (MRNGSVLFGLFFIGHSCSVLLA), serve as a signal peptide directing secretion. The RxLR-dEER motif lies at 47 to 62 (RTLQADDSERTLAEER).

It belongs to the RxLR effector family.

Its subcellular location is the secreted. The protein localises to the host nucleus. In terms of biological role, secreted effector that completely suppresses the host cell death induced by cell death-inducing proteins. This chain is Secreted RxLR effector protein 152, found in Plasmopara viticola (Downy mildew of grapevine).